The following is a 145-amino-acid chain: MQMDHKQVMRALPHSYPFLLVDKVTECIPGECIVAVKNVTFNEPFFVGHFPGNPIMPGVLIVEALAQASMLCVVCDADGESTGDTSVLFMSIDSARFRKVVVPGDVLVLKSSVCHRRGNSCRFDCRAYVEDVLVTEAQILAMMNK.

The active site involves His-49.

This sequence belongs to the thioester dehydratase family. FabZ subfamily.

The protein localises to the cytoplasm. The enzyme catalyses a (3R)-hydroxyacyl-[ACP] = a (2E)-enoyl-[ACP] + H2O. Involved in unsaturated fatty acids biosynthesis. Catalyzes the dehydration of short chain beta-hydroxyacyl-ACPs and long chain saturated and unsaturated beta-hydroxyacyl-ACPs. The chain is 3-hydroxyacyl-[acyl-carrier-protein] dehydratase FabZ from Anaplasma phagocytophilum (strain HZ).